The following is a 426-amino-acid chain: Tol-Pal system protein TolB (426 aa).

Residues 1 to 25 form the signal peptide; that stretch reads MNILLSRFRLLLAAALAALSWGAQA.

Belongs to the TolB family. In terms of assembly, the Tol-Pal system is composed of five core proteins: the inner membrane proteins TolA, TolQ and TolR, the periplasmic protein TolB and the outer membrane protein Pal. They form a network linking the inner and outer membranes and the peptidoglycan layer.

It is found in the periplasm. Part of the Tol-Pal system, which plays a role in outer membrane invagination during cell division and is important for maintaining outer membrane integrity. The sequence is that of Tol-Pal system protein TolB from Aromatoleum aromaticum (strain DSM 19018 / LMG 30748 / EbN1) (Azoarcus sp. (strain EbN1)).